The sequence spans 769 residues: Sensor histidine kinase ComP (769 aa).

Residues 1 to 9 (MKNLIKKFT) lie on the Cytoplasmic side of the membrane. The chain crosses the membrane as a helical span at residues 10–33 (IAVIVLSILYISYTTYISMNGIII). Residues 34–113 (GTKIHKNDKS…DFDLVTLNRP (80 aa)) are Extracellular-facing. The helical transmembrane segment at 114 to 134 (YSFFLFVLPLFFYFLSIICIF) threads the bilayer. The Cytoplasmic portion of the chain corresponds to 135 to 144 (YILKVNKKRR). The helical transmembrane segment at 145–167 (SFAAYILILLLLDISIAYISAGG) threads the bilayer. The Extracellular portion of the chain corresponds to 168-235 (PFRGHIINRY…QDYLQVDIDF (68 aa)). A helical transmembrane segment spans residues 236–257 (LATLNLVSFATLTLFSFSAIYL). The Cytoplasmic segment spans residues 258 to 272 (HLNKYKYAEHSFILK). The chain crosses the membrane as a helical span at residues 273–295 (LLILTNTLSFAPFLIFFVLPIIF). At 296–299 (TGNY) the chain is on the extracellular side. The helical transmembrane segment at 300-323 (IFPALASASLLVLIPFGLVYQFVA) threads the bilayer. At 324–337 (NKMFDIEFILGRMR) the chain is on the cytoplasmic side. A helical transmembrane segment spans residues 338–357 (YYALLAMIPTLLIVGALVLF). At 358-361 (DVMD) the chain is on the extracellular side. The helical transmembrane segment at 362-383 (IQMNPVRQTVFFFVVMFAVFYF) threads the bilayer. Topologically, residues 384 to 769 (KEVMDFKFRL…GFKADIEIEL (386 aa)) are cytoplasmic. A Histidine kinase domain is found at 571–769 (LARDLHDSVL…GFKADIEIEL (199 aa)). H576 bears the Phosphohistidine; by autocatalysis mark.

Autophosphorylates on a histidine and transfers the phosphate group onto an aspartate in ComA, thus activating it.

It localises to the cell membrane. The catalysed reaction is ATP + protein L-histidine = ADP + protein N-phospho-L-histidine.. Sensor in the two-component regulatory system ComP/ComA involved in a major quorum response pathway that regulates the development of genetic competence. Plays a role in sporulation, at least partly interchangeable with that of SpoIIJ. Probably activates ComA by phosphorylation. In Bacillus subtilis (strain 168), this protein is Sensor histidine kinase ComP (comP).